Here is a 257-residue protein sequence, read N- to C-terminus: UPF0246 protein Rpic_2164 (257 aa).

This sequence belongs to the UPF0246 family.

This is UPF0246 protein Rpic_2164 from Ralstonia pickettii (strain 12J).